The primary structure comprises 361 residues: Cytochrome P450 family protein EryCII (361 aa).

This sequence belongs to the cytochrome P450 family. As to quaternary structure, heterotetramer composed of EryCII and EryCIII.

It participates in antibiotic biosynthesis; erythromycin biosynthesis. Involved in the erythromycin biosynthesis pathway. Acts by forming a complex and stabilizing the desosaminyl transferase EryCIII. This Saccharopolyspora erythraea (strain ATCC 11635 / DSM 40517 / JCM 4748 / NBRC 13426 / NCIMB 8594 / NRRL 2338) protein is Cytochrome P450 family protein EryCII (eryCII).